The primary structure comprises 51 residues: Protein Tat (51 aa).

Residues 1–25 are compositionally biased toward polar residues; the sequence is EAETATKSCSGRQANQVSLPKQPAS. A disordered region spans residues 1–51; the sequence is EAETATKSCSGRQANQVSLPKQPASQPRGDPTGPKESKKKVETETETDPVN. Residue lysine 21 forms a Glycyl lysine isopeptide (Lys-Gly) (interchain with G-Cter in ubiquitin) linkage. The Cell attachment site signature appears at 28 to 30; the sequence is RGD. Positions 33-43 are enriched in basic and acidic residues; that stretch reads GPKESKKKVET.

It belongs to the lentiviruses Tat family. Interacts with host CCNT1. Associates with the P-TEFb complex composed at least of Tat, P-TEFb (CDK9 and CCNT1), TAR RNA, RNA Pol II. Recruits the HATs CREBBP, TAF1/TFIID, EP300, PCAF and GCN5L2. Interacts with host KAT5/Tip60; this interaction targets the latter to degradation. Interacts with the host deacetylase SIRT1. Interacts with host capping enzyme RNGTT; this interaction stimulates RNGTT. Binds to host KDR, and to the host integrins ITGAV/ITGB3 and ITGA5/ITGB1. Interacts with host KPNB1/importin beta-1 without previous binding to KPNA1/importin alpha-1. Interacts with EIF2AK2. Interacts with host nucleosome assembly protein NAP1L1; this interaction may be required for the transport of Tat within the nucleus, since the two proteins interact at the nuclear rim. Interacts with host C1QBP/SF2P32; this interaction involves lysine-acetylated Tat. Interacts with the host chemokine receptors CCR2, CCR3 and CXCR4. Interacts with host DPP4/CD26; this interaction may trigger an anti-proliferative effect. Interacts with host LDLR. Interacts with the host extracellular matrix metalloproteinase MMP1. Interacts with host PRMT6; this interaction mediates Tat's methylation. Interacts with, and is ubiquitinated by MDM2/Hdm2. Interacts with host PSMC3 and HTATIP2. Interacts with STAB1; this interaction may overcome SATB1-mediated repression of IL2 and IL2RA (interleukin) in T cells by binding to the same domain than HDAC1. Interacts (when acetylated) with human CDK13, thereby increasing HIV-1 mRNA splicing and promoting the production of the doubly spliced HIV-1 protein Nef. Post-translationally, acetylation by EP300, CREBBP, GCN5L2/GCN5 and PCAF regulates the transactivation activity of Tat. Phosphorylated by EIF2AK2 on serine and threonine residues adjacent to the basic region important for TAR RNA binding and function. Phosphorylation of Tat by EIF2AK2 is dependent on the prior activation of EIF2AK2 by dsRNA. In terms of processing, asymmetrical arginine methylation by host PRMT6 seems to diminish the transactivation capacity of Tat and affects the interaction with host CCNT1. Post-translationally, polyubiquitination by MDM2 does not target Tat to degradation, but activates its transactivation function and fosters interaction with CCNT1 and TAR RNA.

Its subcellular location is the host nucleus. The protein resides in the host nucleolus. It is found in the host cytoplasm. The protein localises to the secreted. Its function is as follows. Transcriptional activator that increases RNA Pol II processivity, thereby increasing the level of full-length viral transcripts. Recognizes a hairpin structure at the 5'-LTR of the nascent viral mRNAs referred to as the transactivation responsive RNA element (TAR) and recruits the cyclin T1-CDK9 complex (P-TEFb complex) that will in turn hyperphosphorylate the RNA polymerase II to allow efficient elongation. The CDK9 component of P-TEFb and other Tat-activated kinases hyperphosphorylate the C-terminus of RNA Pol II that becomes stabilized and much more processive. Other factors such as HTATSF1/Tat-SF1, SUPT5H/SPT5, and HTATIP2 are also important for Tat's function. Besides its effect on RNA Pol II processivity, Tat induces chromatin remodeling of proviral genes by recruiting the histone acetyltransferases (HATs) CREBBP, EP300 and PCAF to the chromatin. This also contributes to the increase in proviral transcription rate, especially when the provirus integrates in transcriptionally silent region of the host genome. To ensure maximal activation of the LTR, Tat mediates nuclear translocation of NF-kappa-B by interacting with host RELA. Through its interaction with host TBP, Tat may also modulate transcription initiation. Tat can reactivate a latently infected cell by penetrating in it and transactivating its LTR promoter. In the cytoplasm, Tat is thought to act as a translational activator of HIV-1 mRNAs. Functionally, extracellular circulating Tat can be endocytosed by surrounding uninfected cells via the binding to several surface receptors such as CD26, CXCR4, heparan sulfate proteoglycans (HSPG) or LDLR. Neurons are rarely infected, but they internalize Tat via their LDLR. Endosomal low pH allows Tat to cross the endosome membrane to enter the cytosol and eventually further translocate into the nucleus, thereby inducing severe cell dysfunctions ranging from cell activation to cell death. Through its interaction with nuclear HATs, Tat is potentially able to control the acetylation-dependent cellular gene expression. Tat seems to inhibit the HAT activity of KAT5/Tip60 and TAF1, and consequently modify the expression of specific cellular genes. Modulates the expression of many cellular genes involved in cell survival, proliferation or in coding for cytokines (such as IL10) or cytokine receptors. May be involved in the derepression of host interleukin IL2 expression. Mediates the activation of cyclin-dependent kinases and dysregulation of microtubule network. Tat plays a role in T-cell and neurons apoptosis. Tat induced neurotoxicity and apoptosis probably contribute to neuroAIDS. Host extracellular matrix metalloproteinase MMP1 cleaves Tat and decreases Tat's mediated neurotoxicity. Circulating Tat also acts as a chemokine-like and/or growth factor-like molecule that binds to specific receptors on the surface of the cells, affecting many cellular pathways. In the vascular system, Tat binds to ITGAV/ITGB3 and ITGA5/ITGB1 integrins dimers at the surface of endothelial cells and competes with bFGF for heparin-binding sites, leading to an excess of soluble bFGF. Binds to KDR/VEGFR-2. All these Tat-mediated effects enhance angiogenesis in Kaposi's sarcoma lesions. In Homo sapiens (Human), this protein is Protein Tat.